A 183-amino-acid polypeptide reads, in one-letter code: Caspase recruitment domain-containing protein 19 (183 aa).

Cysteines 7 and 77 form a disulfide. The CARD domain maps to Asp8–Tyr99. Residues Gly122–Cys142 form a helical membrane-spanning segment.

Associates with BCL10 by CARD-CARD interaction.

It localises to the endoplasmic reticulum membrane. Its subcellular location is the mitochondrion membrane. In terms of biological role, plays a role in inhibiting the effects of BCL10-induced activation of NF-kappa-B. The sequence is that of Caspase recruitment domain-containing protein 19 from Mus musculus (Mouse).